Here is a 434-residue protein sequence, read N- to C-terminus: Serine--tRNA ligase (434 aa).

239–241 (TAE) provides a ligand contact to L-serine. 270–272 (RSE) contributes to the ATP binding site. Glu-293 lines the L-serine pocket. Residue 357–360 (EISS) participates in ATP binding. Ser-392 is an L-serine binding site.

The protein belongs to the class-II aminoacyl-tRNA synthetase family. Type-1 seryl-tRNA synthetase subfamily. As to quaternary structure, homodimer. The tRNA molecule binds across the dimer.

The protein localises to the cytoplasm. The enzyme catalyses tRNA(Ser) + L-serine + ATP = L-seryl-tRNA(Ser) + AMP + diphosphate + H(+). It carries out the reaction tRNA(Sec) + L-serine + ATP = L-seryl-tRNA(Sec) + AMP + diphosphate + H(+). It functions in the pathway aminoacyl-tRNA biosynthesis; selenocysteinyl-tRNA(Sec) biosynthesis; L-seryl-tRNA(Sec) from L-serine and tRNA(Sec): step 1/1. Functionally, catalyzes the attachment of serine to tRNA(Ser). Is also able to aminoacylate tRNA(Sec) with serine, to form the misacylated tRNA L-seryl-tRNA(Sec), which will be further converted into selenocysteinyl-tRNA(Sec). The polypeptide is Serine--tRNA ligase (Cupriavidus necator (strain ATCC 17699 / DSM 428 / KCTC 22496 / NCIMB 10442 / H16 / Stanier 337) (Ralstonia eutropha)).